The primary structure comprises 719 residues: Pesticidal crystal protein Cry1Ic (719 aa).

It belongs to the delta endotoxin family.

In terms of biological role, promotes colloidosmotic lysis by binding to the midgut epithelial cells of insects. This Bacillus thuringiensis protein is Pesticidal crystal protein Cry1Ic (cry1Ic).